Here is a 120-residue protein sequence, read N- to C-terminus: Chaperonin GroEL (120 aa).

23–27 (DGTTT) contacts ATP.

The protein belongs to the chaperonin (HSP60) family. Forms a cylinder of 14 subunits composed of two heptameric rings stacked back-to-back. Interacts with the co-chaperonin GroES.

The protein resides in the cytoplasm. It catalyses the reaction ATP + H2O + a folded polypeptide = ADP + phosphate + an unfolded polypeptide.. Together with its co-chaperonin GroES, plays an essential role in assisting protein folding. The GroEL-GroES system forms a nano-cage that allows encapsulation of the non-native substrate proteins and provides a physical environment optimized to promote and accelerate protein folding. The chain is Chaperonin GroEL from Mycobacterium gordonae.